Reading from the N-terminus, the 287-residue chain is Elongation factor Ts (287 aa).

Positions 80-83 (TDFL) are involved in Mg(2+) ion dislocation from EF-Tu.

This sequence belongs to the EF-Ts family.

The protein localises to the cytoplasm. Its function is as follows. Associates with the EF-Tu.GDP complex and induces the exchange of GDP to GTP. It remains bound to the aminoacyl-tRNA.EF-Tu.GTP complex up to the GTP hydrolysis stage on the ribosome. In Pseudomonas syringae pv. tomato (strain ATCC BAA-871 / DC3000), this protein is Elongation factor Ts.